The sequence spans 423 residues: CinA-like protein (423 aa).

Belongs to the CinA family.

The chain is CinA-like protein from Chlorobium phaeobacteroides (strain DSM 266 / SMG 266 / 2430).